A 26-amino-acid chain; its full sequence is Potassium channel toxin alpha-KTx6 OcyKTx1 (26 aa).

C3 and C24 form a disulfide bridge.

The protein belongs to the short scorpion toxin superfamily. Potassium channel inhibitor family. Alpha-KTx 06 subfamily. In terms of tissue distribution, expressed by the venom gland.

Its subcellular location is the secreted. Blocks voltage-gated potassium channels. In Opisthacanthus cayaporum (South American scorpion), this protein is Potassium channel toxin alpha-KTx6 OcyKTx1.